Reading from the N-terminus, the 534-residue chain is GPI transamidase component GPI17 (534 aa).

Topologically, residues 1–8 (MSNANLRK) are cytoplasmic. A helical membrane pass occupies residues 9-29 (WVGFCFVAIYLFLGVPLWYKL). Residues 30–472 (TTVYRASLPI…VQQNFFPQEH (443 aa)) lie on the Lumenal side of the membrane. N100, N170, N228, N247, and N299 each carry an N-linked (GlcNAc...) asparagine glycan. The chain crosses the membrane as a helical span at residues 473 to 493 (MIAVYLPLLGPISAVMFFGFY). Topologically, residues 494–534 (NVMKEKNQKSKKNGTEREVAKEKLELKEAQKLHAIDGEDEL) are cytoplasmic.

Belongs to the PIGS family. As to quaternary structure, forms a complex with CDC91, GPI16, GPI8 and GAA1. N-glycosylated.

It localises to the endoplasmic reticulum membrane. Its pathway is glycolipid biosynthesis; glycosylphosphatidylinositol-anchor biosynthesis. In terms of biological role, component of the GPI transamidase complex. Involved in transfer of GPI to proteins. In Saccharomyces cerevisiae (strain ATCC 204508 / S288c) (Baker's yeast), this protein is GPI transamidase component GPI17 (GPI17).